A 317-amino-acid polypeptide reads, in one-letter code: MVVSGAPPALGGGCLGTFTSLLLLASTAILNAARIPVPPACGKPQQLNRVVGGEDSTDSEWPWIVSIQKNGTHHCAGSLLTSRWVITAAHCFKDNLNKPYLFSVLLGAWQLGNPGSRSQKVGVAWVEPHPVYSWKEGACADIALVRLERSIQFSERVLPICLPDASIHLPPNTHCWISGWGSIQDGVPLPHPQTLQKLKVPIIDSEVCSHLYWRGAGQGPITEDMLCAGYLEGERDACLGDSGGPLMCQVDGAWLLAGIISWGEGCAERNRPGVYISLSAHRSWVEKIVQGVQLRGRAQGGGALRAPSQGSGAAARS.

An N-terminal signal peptide occupies residues 1–32 (MVVSGAPPALGGGCLGTFTSLLLLASTAILNA). Positions 50-290 (VVGGEDSTDS…HRSWVEKIVQ (241 aa)) constitute a Peptidase S1 domain. N-linked (GlcNAc...) asparagine glycosylation is present at Asn-70. An intrachain disulfide couples Cys-75 to Cys-91. Catalysis depends on charge relay system residues His-90 and Asp-141. 3 cysteine pairs are disulfide-bonded: Cys-175–Cys-248, Cys-208–Cys-227, and Cys-238–Cys-266. The active-site Charge relay system is Ser-242.

It belongs to the peptidase S1 family. Expressed abundantly in the epithelial cells of the airways, including trachea, esophagus and fetal lung. Scarce in adult lung. Expressed at low levels in placenta, pancreas, prostate and thyroid gland.

The protein localises to the secreted. In terms of biological role, preferentially cleaves the synthetic substrate H-D-Leu-Thr-Arg-pNA compared to tosyl-Gly-Pro-Arg-pNA. The protein is Brain-specific serine protease 4 (PRSS22) of Homo sapiens (Human).